Here is a 304-residue protein sequence, read N- to C-terminus: tRNA pseudouridine synthase B (304 aa).

Catalysis depends on aspartate 38, which acts as the Nucleophile.

This sequence belongs to the pseudouridine synthase TruB family. Type 1 subfamily.

The enzyme catalyses uridine(55) in tRNA = pseudouridine(55) in tRNA. In terms of biological role, responsible for synthesis of pseudouridine from uracil-55 in the psi GC loop of transfer RNAs. The protein is tRNA pseudouridine synthase B of Listeria monocytogenes serotype 4b (strain F2365).